We begin with the raw amino-acid sequence, 132 residues long: Large ribosomal subunit protein bL12 (132 aa).

A compositionally biased stretch (basic and acidic residues) spans 100–126 (ESTPKPVKEGASKEDAEAAKKELEEAG). The disordered stretch occupies residues 100–132 (ESTPKPVKEGASKEDAEAAKKELEEAGAKVSIK).

The protein belongs to the bacterial ribosomal protein bL12 family. In terms of assembly, homodimer. Part of the ribosomal stalk of the 50S ribosomal subunit. Forms a multimeric L10(L12)X complex, where L10 forms an elongated spine to which 2 to 4 L12 dimers bind in a sequential fashion. Binds GTP-bound translation factors.

In terms of biological role, forms part of the ribosomal stalk which helps the ribosome interact with GTP-bound translation factors. Is thus essential for accurate translation. The chain is Large ribosomal subunit protein bL12 from Thermosynechococcus vestitus (strain NIES-2133 / IAM M-273 / BP-1).